The sequence spans 161 residues: C-type lectin lectoxin-Lio3 (161 aa).

Residues 1–23 (MRRFIFMSLGLLVLAFSLSGIGA) form the signal peptide. Intrachain disulfides connect cysteine 27–cysteine 38, cysteine 55–cysteine 154, and cysteine 129–cysteine 146. Residues 34–155 (HNISCYKLFT…CGLLHYFICQ (122 aa)) form the C-type lectin domain. N-linked (GlcNAc...) asparagine glycosylation occurs at asparagine 35. The short motif at 117-119 (KGE) is the Mannose-binding element. Ca(2+) is bound by residues glutamate 127, asparagine 142, and aspartate 143.

It belongs to the true venom lectin family. Expressed by the venom gland.

The protein localises to the secreted. Its function is as follows. Mannose-binding lectin which recognizes specific carbohydrate structures and agglutinates a variety of animal cells by binding to cell-surface glycoproteins and glycolipids. May be a calcium-dependent lectin. The polypeptide is C-type lectin lectoxin-Lio3 (Erythrolamprus poecilogyrus (Water snake)).